A 265-amino-acid chain; its full sequence is Indole-3-glycerol phosphate synthase (265 aa).

This sequence belongs to the TrpC family.

The enzyme catalyses 1-(2-carboxyphenylamino)-1-deoxy-D-ribulose 5-phosphate + H(+) = (1S,2R)-1-C-(indol-3-yl)glycerol 3-phosphate + CO2 + H2O. It functions in the pathway amino-acid biosynthesis; L-tryptophan biosynthesis; L-tryptophan from chorismate: step 4/5. This chain is Indole-3-glycerol phosphate synthase, found in Xanthomonas axonopodis pv. citri (strain 306).